Consider the following 177-residue polypeptide: Large ribosomal subunit protein uL6 (177 aa).

Belongs to the universal ribosomal protein uL6 family. In terms of assembly, part of the 50S ribosomal subunit.

In terms of biological role, this protein binds to the 23S rRNA, and is important in its secondary structure. It is located near the subunit interface in the base of the L7/L12 stalk, and near the tRNA binding site of the peptidyltransferase center. In Hahella chejuensis (strain KCTC 2396), this protein is Large ribosomal subunit protein uL6.